Reading from the N-terminus, the 418-residue chain is Gamma-glutamyl phosphate reductase (418 aa).

Belongs to the gamma-glutamyl phosphate reductase family.

It localises to the cytoplasm. It catalyses the reaction L-glutamate 5-semialdehyde + phosphate + NADP(+) = L-glutamyl 5-phosphate + NADPH + H(+). The protein operates within amino-acid biosynthesis; L-proline biosynthesis; L-glutamate 5-semialdehyde from L-glutamate: step 2/2. Catalyzes the NADPH-dependent reduction of L-glutamate 5-phosphate into L-glutamate 5-semialdehyde and phosphate. The product spontaneously undergoes cyclization to form 1-pyrroline-5-carboxylate. This chain is Gamma-glutamyl phosphate reductase, found in Colwellia psychrerythraea (strain 34H / ATCC BAA-681) (Vibrio psychroerythus).